Here is a 585-residue protein sequence, read N- to C-terminus: MKMASSLACLLLNFHVSVFLVQLLTPCSAQFSVLGPSGPILAMVGEDADLPCHLFPTMSAETMELRWVSSSLRQVVNVYADGKEVEDRQSAPYRGRTSILRDGITAGKAALRIHNVTASDSGKYLCYFQDGDFYEKALVELKVAALGSDLHVEVKGYENGGIHLECRSTGWYPQPQIKWSDAKGENIPAVEAPVVADGVGLYAVAASVIMRGGSGGGVSCIIRNSLLGLEKTASISIADPFFTSAQPWIAALAGTLPISLLLLAGASYFLWRQQKEKIALSRETERERELKEMGYAATKQEISLREKLQDELKWRKIRYMARGEKSLAYHEWKMALFKPADVILDPDTANAILLVSEDQRSVQRAEEPRDLPDNPERFEWRYCVLGCENFTSGRHYWEVEVGDRKEWHIGVCSKNVERKKGWVKMTPENGYWTMGPTDGNKYRALTEPRTNLKLPEPPRKVGIFLDYETGEISFYNAMDGSHIYTFPHTSFSEPVYPVFRILTLEPTALTICPTPKEVDRSPNPDLVLDHSLETPVTPALANESGEPQAEVTSLLLPANAGAEGVSPSTTTSQNHKPQACTEALY.

The signal sequence occupies residues 1-29 (MKMASSLACLLLNFHVSVFLVQLLTPCSA). Ig-like V-type domains are found at residues 30–139 (QFSV…KALV) and 145–236 (ALGS…ASIS). Residues 30-248 (QFSVLGPSGP…DPFFTSAQPW (219 aa)) are Extracellular-facing. Cystine bridges form between Cys-52-Cys-126 and Cys-166-Cys-220. The N-linked (GlcNAc...) asparagine glycan is linked to Asn-115. The helical transmembrane segment at 249–269 (IAALAGTLPISLLLLAGASYF) threads the bilayer. The Cytoplasmic segment spans residues 270 to 585 (LWRQQKEKIA…KPQACTEALY (316 aa)). One can recognise a B30.2/SPRY domain in the interval 322–518 (RGEKSLAYHE…LTICPTPKEV (197 aa)). The segment at 560-585 (AGAEGVSPSTTTSQNHKPQACTEALY) is disordered. Residues 566 to 576 (SPSTTTSQNHK) are compositionally biased toward polar residues.

It belongs to the immunoglobulin superfamily. BTN/MOG family.

Its subcellular location is the membrane. This Pongo abelii (Sumatran orangutan) protein is Butyrophilin subfamily 3 member A3 (BTN3A3).